We begin with the raw amino-acid sequence, 61 residues long: uncharacterized protein (61 aa).

This is an uncharacterized protein from Saccharomyces cerevisiae (strain ATCC 204508 / S288c) (Baker's yeast).